The primary structure comprises 226 residues: ATP synthase subunit a (226 aa).

The next 5 helical transmembrane spans lie at 18–38, 74–94, 100–120, 162–182, and 187–207; these read LSLNWLSTFLGLLIIPSTYWL, FVSLFSLIMFNNFLGLFPYIF, LTLTLTLAFPLWLSFMLYGWI, LTANMIAGHLLMTLLGNTGPM, and IILSLILITQIALLVLESAVA.

This sequence belongs to the ATPase A chain family. In terms of assembly, F-type ATPases have 2 components, CF(1) - the catalytic core - and CF(0) - the membrane proton channel. CF(1) has five subunits: alpha(3), beta(3), gamma(1), delta(1), epsilon(1). CF(0) has three main subunits: a, b and c.

Its subcellular location is the mitochondrion inner membrane. Functionally, mitochondrial membrane ATP synthase (F(1)F(0) ATP synthase or Complex V) produces ATP from ADP in the presence of a proton gradient across the membrane which is generated by electron transport complexes of the respiratory chain. F-type ATPases consist of two structural domains, F(1) - containing the extramembraneous catalytic core and F(0) - containing the membrane proton channel, linked together by a central stalk and a peripheral stalk. During catalysis, ATP synthesis in the catalytic domain of F(1) is coupled via a rotary mechanism of the central stalk subunits to proton translocation. Key component of the proton channel; it may play a direct role in the translocation of protons across the membrane. This is ATP synthase subunit a from Aedes aegypti (Yellowfever mosquito).